A 431-amino-acid polypeptide reads, in one-letter code: Glutamate-1-semialdehyde 2,1-aminomutase (431 aa).

Position 269 is an N6-(pyridoxal phosphate)lysine (Lys269).

This sequence belongs to the class-III pyridoxal-phosphate-dependent aminotransferase family. HemL subfamily. In terms of assembly, homodimer. The cofactor is pyridoxal 5'-phosphate.

It localises to the cytoplasm. It carries out the reaction (S)-4-amino-5-oxopentanoate = 5-aminolevulinate. The protein operates within porphyrin-containing compound metabolism; protoporphyrin-IX biosynthesis; 5-aminolevulinate from L-glutamyl-tRNA(Glu): step 2/2. This is Glutamate-1-semialdehyde 2,1-aminomutase from Francisella tularensis subsp. mediasiatica (strain FSC147).